Consider the following 203-residue polypeptide: MRGRFITLEGMDGAGKSSHIESIVSVLEGRGLEVVSTREPGGTPLGEKLRELLLHERMHVETETLLMFAARREHIAEVIEPALARGAWVVSDRFTDASFAYQCGGRGVPCEKVEALEAWVHPDLQPDLTLLFDVPVEISVARLAAARTPDKFERESAEFFRRIRNGYLARAEAQPQRFRLIDGNRPMDTVRKEVLDIMREFKA.

10-17 lines the ATP pocket; it reads GMDGAGKS.

This sequence belongs to the thymidylate kinase family.

It carries out the reaction dTMP + ATP = dTDP + ADP. In terms of biological role, phosphorylation of dTMP to form dTDP in both de novo and salvage pathways of dTTP synthesis. This chain is Thymidylate kinase, found in Methylobacillus flagellatus (strain ATCC 51484 / DSM 6875 / VKM B-1610 / KT).